A 285-amino-acid polypeptide reads, in one-letter code: MRLIIVSGRSGSGKSTALDVLEDHGYYCIDNLPAGLLPELAERALIHTELAQPLVAVSIDARNLPSHLSRFPELLEEVRSRHIQCDVLYLDADEETLLKRFSETRRRHPLSSANRSLAEAIHDETQLLGPIVDLADLKVNTTNLNLYQLRDTIKLRLLNQPEPGTAFLVESFGFKRGMPVDADLVFDVRCLPNPYWKPELRAQSGLDAPVAEYLAAQPDVEEMFQDISSYLLKWLPRFAASNRAYVTIAIGCTGGHHRSVYLTERLGQVLQKSLKNVQVRHRDLS.

8–15 (GRSGSGKS) is a binding site for ATP. 60-63 (DARN) serves as a coordination point for GTP.

The protein belongs to the RapZ-like family.

Displays ATPase and GTPase activities. The sequence is that of Nucleotide-binding protein PFL_0912 from Pseudomonas fluorescens (strain ATCC BAA-477 / NRRL B-23932 / Pf-5).